Consider the following 205-residue polypeptide: Rho-related protein racI (205 aa).

12-19 (GDSKTGKT) serves as a coordination point for GTP. The Effector region signature appears at 34–42 (YVPSHVDAT). GTP is bound by residues 59–63 (DSSAL) and 119–122 (TKCD). At C202 the chain carries Cysteine methyl ester. C202 carries S-geranylgeranyl cysteine lipidation. Positions 203–205 (IIQ) are cleaved as a propeptide — removed in mature form.

It belongs to the small GTPase superfamily. Rho family.

It is found in the cell membrane. The polypeptide is Rho-related protein racI (racI) (Dictyostelium discoideum (Social amoeba)).